We begin with the raw amino-acid sequence, 464 residues long: Tyrosine--tRNA ligase, mitochondrial (464 aa).

Position 61 (tyrosine 61) interacts with L-tyrosine. Residue aspartate 65 participates in ATP binding. A 'HIGH' region motif is present at residues 66-75; it reads PTADSLHVGN. Aspartate 105, tyrosine 209, glutamine 213, aspartate 216, and glutamine 235 together coordinate L-tyrosine. Positions 270–274 match the 'KMSKS' region motif; the sequence is KFGKS. An ATP-binding site is contributed by lysine 273.

Belongs to the class-I aminoacyl-tRNA synthetase family. Homodimer.

It localises to the mitochondrion matrix. The enzyme catalyses tRNA(Tyr) + L-tyrosine + ATP = L-tyrosyl-tRNA(Tyr) + AMP + diphosphate + H(+). Functionally, catalyzes the attachment of tyrosine to tRNA(Tyr) in a two-step reaction: tyrosine is first activated by ATP to form Tyr-AMP and then transferred to the acceptor end of tRNA(Tyr). This Drosophila melanogaster (Fruit fly) protein is Tyrosine--tRNA ligase, mitochondrial.